Consider the following 631-residue polypeptide: Integrator complex subunit 10 (631 aa).

Residues 545–570 (FELTSSPNSSGTPTATTVAGGSQSRR) show a composition bias toward polar residues. A disordered region spans residues 545–577 (FELTSSPNSSGTPTATTVAGGSQSRRIGTRGAD).

It belongs to the Integrator subunit 10 family. Belongs to the multiprotein complex Integrator, at least composed of IntS1, IntS2, IntS3, IntS4, omd/IntS5, IntS6, defl/IntS7, IntS8, IntS9, IntS10, IntS11, IntS12, asun/IntS13, IntS14 and IntS15. The core complex associates with protein phosphatase 2A subunits mts/PP2A and Pp2A-29B, to form the Integrator-PP2A (INTAC) complex.

It is found in the nucleus. Its function is as follows. Component of the integrator complex, a multiprotein complex that terminates RNA polymerase II (Pol II) transcription in the promoter-proximal region of genes. The integrator complex provides a quality checkpoint during transcription elongation by driving premature transcription termination of transcripts that are unfavorably configured for transcriptional elongation: the complex terminates transcription by (1) catalyzing dephosphorylation of the C-terminal domain (CTD) of Pol II subunit Polr2A/Rbp1 and Spt5, and (2) degrading the exiting nascent RNA transcript via endonuclease activity. The integrator complex is also involved in the 3'-end processing of the U7 snRNA, and also the spliceosomal snRNAs U1, U2, U4 and U5. This is Integrator complex subunit 10 from Drosophila melanogaster (Fruit fly).